Reading from the N-terminus, the 101-residue chain is Apolipoprotein C-II (101 aa).

A signal peptide spans 1 to 22; the sequence is MGTRFLLALCLVLLVLGFEVQG. A lipid binding region spans residues 66-74; sequence AVDEKLRDL. The interval 78–101 is lipoprotein lipase cofactor; that stretch reads STAAMSTYTGIFTDQVLSVLKGEE.

It belongs to the apolipoprotein C2 family. In terms of processing, proapolipoprotein C-II is synthesized as a sialic acid containing glycoprotein which is subsequently desialylated prior to its proteolytic processing. Post-translationally, proapolipoprotein C-II, the major form found in plasma undergoes proteolytic cleavage of its N-terminal hexapeptide to generate apolipoprotein C-II, which occurs as the minor form in plasma.

It is found in the secreted. Functionally, component of chylomicrons, very low-density lipoproteins (VLDL), low-density lipoproteins (LDL), and high-density lipoproteins (HDL) in plasma. Plays an important role in lipoprotein metabolism as an activator of lipoprotein lipase. Both proapolipoprotein C-II and apolipoprotein C-II can activate lipoprotein lipase. In Macaca fascicularis (Crab-eating macaque), this protein is Apolipoprotein C-II (APOC2).